The following is a 62-amino-acid chain: UPF0434 protein SPO3421 (62 aa).

The protein belongs to the UPF0434 family.

In Ruegeria pomeroyi (strain ATCC 700808 / DSM 15171 / DSS-3) (Silicibacter pomeroyi), this protein is UPF0434 protein SPO3421.